We begin with the raw amino-acid sequence, 505 residues long: Glutamate--tRNA ligase (505 aa).

The short motif at 12–22 (PSPTGDPHVGT) is the 'HIGH' region element. Residues 253-257 (KLSKR) carry the 'KMSKS' region motif. Lysine 256 serves as a coordination point for ATP.

The protein belongs to the class-I aminoacyl-tRNA synthetase family. Glutamate--tRNA ligase type 1 subfamily. As to quaternary structure, monomer.

It is found in the cytoplasm. The catalysed reaction is tRNA(Glu) + L-glutamate + ATP = L-glutamyl-tRNA(Glu) + AMP + diphosphate. Catalyzes the attachment of glutamate to tRNA(Glu) in a two-step reaction: glutamate is first activated by ATP to form Glu-AMP and then transferred to the acceptor end of tRNA(Glu). This chain is Glutamate--tRNA ligase, found in Chlamydia felis (strain Fe/C-56) (Chlamydophila felis).